The sequence spans 154 residues: Myoglobin (154 aa).

The region spanning 2-148 (GLSEGEWQLV…FRKDIAAKYK (147 aa)) is the Globin domain. S4 carries the post-translational modification Phosphoserine. H65 serves as a coordination point for nitrite. Residue H65 coordinates O2. T68 carries the post-translational modification Phosphothreonine. H94 provides a ligand contact to heme b.

As to quaternary structure, monomer.

The protein resides in the cytoplasm. It localises to the sarcoplasm. It carries out the reaction Fe(III)-heme b-[protein] + nitric oxide + H2O = Fe(II)-heme b-[protein] + nitrite + 2 H(+). The catalysed reaction is H2O2 + AH2 = A + 2 H2O. In terms of biological role, monomeric heme protein which primary function is to store oxygen and facilitate its diffusion within muscle tissues. Reversibly binds oxygen through a pentacoordinated heme iron and enables its timely and efficient release as needed during periods of heightened demand. Depending on the oxidative conditions of tissues and cells, and in addition to its ability to bind oxygen, it also has a nitrite reductase activity whereby it regulates the production of bioactive nitric oxide. Under stress conditions, like hypoxia and anoxia, it also protects cells against reactive oxygen species thanks to its pseudoperoxidase activity. In Delphinapterus leucas (Beluga whale), this protein is Myoglobin (MB).